The following is a 184-amino-acid chain: Nucleoside triphosphate pyrophosphatase (184 aa).

Asp71 serves as the catalytic Proton acceptor.

This sequence belongs to the Maf family. The cofactor is a divalent metal cation.

The protein resides in the cytoplasm. It catalyses the reaction a ribonucleoside 5'-triphosphate + H2O = a ribonucleoside 5'-phosphate + diphosphate + H(+). The catalysed reaction is a 2'-deoxyribonucleoside 5'-triphosphate + H2O = a 2'-deoxyribonucleoside 5'-phosphate + diphosphate + H(+). Its function is as follows. Nucleoside triphosphate pyrophosphatase. May have a dual role in cell division arrest and in preventing the incorporation of modified nucleotides into cellular nucleic acids. The polypeptide is Nucleoside triphosphate pyrophosphatase (Synechococcus sp. (strain CC9605)).